A 121-amino-acid polypeptide reads, in one-letter code: RxLR effector protein PexRD2 (121 aa).

The first 20 residues, 1-20 (MRLSYVIVVIATSFLVTTEA), serve as a signal peptide directing secretion. A RxLR-dEER motif is present at residues 38–56 (RLLRKHYTAAENDDDSEAR). The segment at 57-121 (ALNTEKMKTM…LNYVAEHTAV (65 aa)) is WY domain.

It belongs to the RxLR effector family. In terms of assembly, homodimer. Interacts with host MAPKKK epsilon (via its kinase domain).

Its subcellular location is the secreted. It is found in the host cytoplasm. The protein resides in the host nucleus. Effector that enhances P.infestans colonization of Nicotiana benthamiana leaves. Induces a weak Cell death response in N.benthamiana. PexRD2-induced cell death is dependent on SGT1, suggesting that PexRD2 is recognized by the plant immune system. Interacts with the kinase domain of the host MAPKKK epsilon, a positive regulator of cell death associated with plant immunity, and perturbs signaling pathways triggered by MAPKKK epsilon. The polypeptide is RxLR effector protein PexRD2 (Phytophthora infestans (strain T30-4) (Potato late blight agent)).